The sequence spans 239 residues: uncharacterized protein (239 aa).

Residues 129-155 (DSLDDEDDNMISSNDPTKSPEEHDTTT) form a disordered region. Ser-160 bears the Phosphoserine mark.

This is an uncharacterized protein from Schizosaccharomyces pombe (strain 972 / ATCC 24843) (Fission yeast).